Reading from the N-terminus, the 166-residue chain is MDVSQLTDAELRDSLKSHGVSVGPIVATTRKLYEKKLIKLSDGSINNQSNLNDSQFNEDSLIISSSPKKSPPQRVFQNVSAATAAATTSPESDSDDCEESMRYLTEEEMAADRASARQAQSNKGGFLGSTITFTILFVFIAVFAYFLIENAEQLKLVAETNPEDTI.

In terms of domain architecture, LEM spans 1–44 (MDVSQLTDAELRDSLKSHGVSVGPIVATTRKLYEKKLIKLSDGS). Over 1–127 (MDVSQLTDAE…QAQSNKGGFL (127 aa)) the chain is Nuclear. Residues 62 to 99 (IISSSPKKSPPQRVFQNVSAATAAATTSPESDSDDCEE) are disordered. Residues 128–148 (GSTITFTILFVFIAVFAYFLI) traverse the membrane as a helical segment. Over 149–166 (ENAEQLKLVAETNPEDTI) the chain is Perinuclear space.

Interacts with lmn-1 and baf-1. In terms of tissue distribution, ubiquitous. Expressed in all cells, except in cells undergoing spermatogenesis. High expression in hypodermis, neurons, pharyngeal muscle, body wall muscle and gonadal sheath.

The protein localises to the nucleus inner membrane. It localises to the nucleus envelope. In terms of biological role, nuclear lamina-associated inner nuclear membrane protein that is involved in cell division, nuclear structure organization, maintenance of nuclear envelope integrity and nuclear envelope reformation after mitosis. Involved in chromosome segregation and cell division, probably via its interaction with the nuclear intermediate filament protein lmn-1, the main component of nuclear lamina. Required to organize the distribution of lmn-1, nuclear pore complexes (NPCs) and chromatin in mitotically active cells. Together with lem-2, plays a role in baf-1 enrichment at the nuclear envelope in anaphase. Together with lem-2, involved in muscle cell attachment to hypodermal cells, as well as muscle cell location and sarcomere organization. May play a role in radiation-induced DNA damage repair response. May repress binding of transcription factor pha-4 with target sequences in pharyngeal cells. This Caenorhabditis elegans protein is Emerin homolog 1 (emr-1).